The sequence spans 300 residues: 4-hydroxy-tetrahydrodipicolinate synthase (300 aa).

Residue Thr-45 coordinates pyruvate. Tyr-140 acts as the Proton donor/acceptor in catalysis. Lys-169 functions as the Schiff-base intermediate with substrate in the catalytic mechanism. Ile-210 provides a ligand contact to pyruvate.

Belongs to the DapA family. Homotetramer; dimer of dimers.

It localises to the cytoplasm. The catalysed reaction is L-aspartate 4-semialdehyde + pyruvate = (2S,4S)-4-hydroxy-2,3,4,5-tetrahydrodipicolinate + H2O + H(+). It functions in the pathway amino-acid biosynthesis; L-lysine biosynthesis via DAP pathway; (S)-tetrahydrodipicolinate from L-aspartate: step 3/4. In terms of biological role, catalyzes the condensation of (S)-aspartate-beta-semialdehyde [(S)-ASA] and pyruvate to 4-hydroxy-tetrahydrodipicolinate (HTPA). This Helicobacter pylori (strain G27) protein is 4-hydroxy-tetrahydrodipicolinate synthase.